The primary structure comprises 219 residues: 2-hydroxy-3-keto-5-methylthiopentenyl-1-phosphate phosphatase (219 aa).

The protein belongs to the HAD-like hydrolase superfamily. MtnX family.

It carries out the reaction 2-hydroxy-5-methylsulfanyl-3-oxopent-1-enyl phosphate + H2O = 1,2-dihydroxy-5-(methylsulfanyl)pent-1-en-3-one + phosphate. It functions in the pathway amino-acid biosynthesis; L-methionine biosynthesis via salvage pathway; L-methionine from S-methyl-5-thio-alpha-D-ribose 1-phosphate: step 4/6. Functionally, dephosphorylates 2-hydroxy-3-keto-5-methylthiopentenyl-1-phosphate (HK-MTPenyl-1-P) yielding 1,2-dihydroxy-3-keto-5-methylthiopentene (DHK-MTPene). This chain is 2-hydroxy-3-keto-5-methylthiopentenyl-1-phosphate phosphatase, found in Bacillus cereus (strain G9842).